A 549-amino-acid chain; its full sequence is Endoplasmic reticulum mannosyl-oligosaccharide 1,2-alpha-mannosidase (549 aa).

The Cytoplasmic portion of the chain corresponds to Met1–Ser4. Residues Val5–Trp24 form a helical; Signal-anchor for type II membrane protein membrane-spanning segment. Residues Tyr25–Leu354 are Lumenal-facing. Asn96, Asn155, and Asn224 each carry an N-linked (GlcNAc...) asparagine glycan. An intrachain disulfide couples Cys340 to Cys385. Glu399 (proton donor) is an active-site residue. The cysteines at positions 468 and 471 are disulfide-linked. Thr525 is a binding site for Ca(2+).

It belongs to the glycosyl hydrolase 47 family. Homodimer. The cofactor is Ca(2+).

The protein resides in the endoplasmic reticulum membrane. It carries out the reaction N(4)-(alpha-D-Man-(1-&gt;2)-alpha-D-Man-(1-&gt;2)-alpha-D-Man-(1-&gt;3)-[alpha-D-Man-(1-&gt;2)-alpha-D-Man-(1-&gt;3)-[alpha-D-Man-(1-&gt;2)-alpha-D-Man-(1-&gt;6)]-alpha-D-Man-(1-&gt;6)]-beta-D-Man-(1-&gt;4)-beta-D-GlcNAc-(1-&gt;4)-beta-D-GlcNAc)-L-asparaginyl-[protein] (N-glucan mannose isomer 9A1,2,3B1,2,3) + 4 H2O = N(4)-(alpha-D-Man-(1-&gt;3)-[alpha-D-Man-(1-&gt;3)-[alpha-D-Man-(1-&gt;6)]-alpha-D-Man-(1-&gt;6)]-beta-D-Man-(1-&gt;4)-beta-D-GlcNAc-(1-&gt;4)-beta-D-GlcNAc)-L-asparaginyl-[protein] (N-glucan mannose isomer 5A1,2) + 4 beta-D-mannose. The catalysed reaction is N(4)-(alpha-D-Man-(1-&gt;2)-alpha-D-Man-(1-&gt;2)-alpha-D-Man-(1-&gt;3)-[alpha-D-Man-(1-&gt;3)-[alpha-D-Man-(1-&gt;2)-alpha-D-Man-(1-&gt;6)]-alpha-D-Man-(1-&gt;6)]-beta-D-Man-(1-&gt;4)-beta-D-GlcNAc-(1-&gt;4)-beta-D-GlcNAc)-L-asparaginyl-[protein] (N-glucan mannose isomer 8A1,2,3B1,3) + 3 H2O = N(4)-(alpha-D-Man-(1-&gt;3)-[alpha-D-Man-(1-&gt;3)-[alpha-D-Man-(1-&gt;6)]-alpha-D-Man-(1-&gt;6)]-beta-D-Man-(1-&gt;4)-beta-D-GlcNAc-(1-&gt;4)-beta-D-GlcNAc)-L-asparaginyl-[protein] (N-glucan mannose isomer 5A1,2) + 3 beta-D-mannose. It participates in protein modification; protein glycosylation. In terms of biological role, involved in glycoprotein quality control as it is important for the targeting of misfolded glycoproteins for degradation. It primarily trims a single alpha-1,2-linked mannose residue from Man(9)GlcNAc(2) to produce Man(8)GlcNAc(2), but at high enzyme concentrations it further trims the carbohydrates to Man(5)GlcNAc(2). This Saccharomyces cerevisiae (strain ATCC 204508 / S288c) (Baker's yeast) protein is Endoplasmic reticulum mannosyl-oligosaccharide 1,2-alpha-mannosidase (MNS1).